Consider the following 304-residue polypeptide: Acetaldehyde dehydrogenase 2 (304 aa).

Residue C131 is the Acyl-thioester intermediate of the active site. NAD(+)-binding positions include 162–170 and N273; that span reads SAGPGTRKN.

Belongs to the acetaldehyde dehydrogenase family.

The catalysed reaction is acetaldehyde + NAD(+) + CoA = acetyl-CoA + NADH + H(+). The protein is Acetaldehyde dehydrogenase 2 of Dechloromonas aromatica (strain RCB).